We begin with the raw amino-acid sequence, 900 residues long: Phosphoenolpyruvate carboxylase (900 aa).

Catalysis depends on residues His-140 and Lys-568.

It belongs to the PEPCase type 1 family. Mg(2+) is required as a cofactor.

It catalyses the reaction oxaloacetate + phosphate = phosphoenolpyruvate + hydrogencarbonate. In terms of biological role, forms oxaloacetate, a four-carbon dicarboxylic acid source for the tricarboxylic acid cycle. This is Phosphoenolpyruvate carboxylase from Neisseria gonorrhoeae (strain ATCC 700825 / FA 1090).